A 465-amino-acid chain; its full sequence is UDP-N-acetylmuramate--L-alanine ligase (465 aa).

118–124 (GTHGKTT) contacts ATP.

Belongs to the MurCDEF family.

The protein localises to the cytoplasm. The catalysed reaction is UDP-N-acetyl-alpha-D-muramate + L-alanine + ATP = UDP-N-acetyl-alpha-D-muramoyl-L-alanine + ADP + phosphate + H(+). Its pathway is cell wall biogenesis; peptidoglycan biosynthesis. Cell wall formation. This chain is UDP-N-acetylmuramate--L-alanine ligase, found in Ruegeria pomeroyi (strain ATCC 700808 / DSM 15171 / DSS-3) (Silicibacter pomeroyi).